The chain runs to 356 residues: UDP-N-acetylglucosamine--N-acetylmuramyl-(pentapeptide) pyrophosphoryl-undecaprenol N-acetylglucosamine transferase (356 aa).

UDP-N-acetyl-alpha-D-glucosamine-binding positions include 12–14 (TGG), Asn-124, Arg-163, Ser-188, Ile-242, and Gln-287.

The protein belongs to the glycosyltransferase 28 family. MurG subfamily.

It is found in the cell inner membrane. The enzyme catalyses di-trans,octa-cis-undecaprenyl diphospho-N-acetyl-alpha-D-muramoyl-L-alanyl-D-glutamyl-meso-2,6-diaminopimeloyl-D-alanyl-D-alanine + UDP-N-acetyl-alpha-D-glucosamine = di-trans,octa-cis-undecaprenyl diphospho-[N-acetyl-alpha-D-glucosaminyl-(1-&gt;4)]-N-acetyl-alpha-D-muramoyl-L-alanyl-D-glutamyl-meso-2,6-diaminopimeloyl-D-alanyl-D-alanine + UDP + H(+). The protein operates within cell wall biogenesis; peptidoglycan biosynthesis. Its function is as follows. Cell wall formation. Catalyzes the transfer of a GlcNAc subunit on undecaprenyl-pyrophosphoryl-MurNAc-pentapeptide (lipid intermediate I) to form undecaprenyl-pyrophosphoryl-MurNAc-(pentapeptide)GlcNAc (lipid intermediate II). The chain is UDP-N-acetylglucosamine--N-acetylmuramyl-(pentapeptide) pyrophosphoryl-undecaprenol N-acetylglucosamine transferase from Pseudomonas syringae pv. tomato (strain ATCC BAA-871 / DC3000).